Here is a 37-residue protein sequence, read N- to C-terminus: Esculentin-2P (37 aa).

A disulfide bond links Cys-31 and Cys-37.

Expressed by the skin glands.

It is found in the secreted. Its function is as follows. Antibacterial activity against Gram-negative bacterium E.coli. The sequence is that of Esculentin-2P from Lithobates pipiens (Northern leopard frog).